Reading from the N-terminus, the 599-residue chain is rRNA (cytosine-C(5))-methyltransferase NOP2C (599 aa).

A PUA domain is found at 158–265 (PKEVLVSRKC…IAVDLNHRVF (108 aa)). S-adenosyl-L-methionine-binding positions include 304 to 310 (CAAPGGK), aspartate 328, and aspartate 355. Residues 372-454 (LINGDNSSSM…GGRAGKSQGF (83 aa)) are disordered. Over residues 378-388 (SSSMTSHSELS) the composition is skewed to low complexity. Residues 399–412 (RRSEADKSCEKNDS) show a composition bias toward basic and acidic residues. The span at 413 to 424 (TEQPNGGDNVSQ) shows a compositional bias: polar residues. The segment covering 428-438 (RKNKGRLKNGR) has biased composition (basic residues). Aspartate 465 serves as a coordination point for S-adenosyl-L-methionine. Cysteine 516 serves as the catalytic Nucleophile.

Belongs to the class I-like SAM-binding methyltransferase superfamily. RsmB/NOP family.

The protein resides in the nucleus. The protein localises to the nucleolus. The catalysed reaction is a cytidine in rRNA + S-adenosyl-L-methionine = a 5-methylcytidine in rRNA + S-adenosyl-L-homocysteine + H(+). Its function is as follows. Involved in ribosomal large subunit assembly. S-adenosyl-L-methionine-dependent methyltransferase that may methylates the C(5) position of cytosine in rRNA. May play a role in the regulation of the cell cycle and the increased nucleolar activity that is associated with the cell proliferation. Seems involved in the regulation of cell proliferation. This chain is rRNA (cytosine-C(5))-methyltransferase NOP2C, found in Arabidopsis thaliana (Mouse-ear cress).